Consider the following 142-residue polypeptide: UPF0310 protein PYRAB08750 (142 aa).

Belongs to the UPF0310 family.

This chain is UPF0310 protein PYRAB08750, found in Pyrococcus abyssi (strain GE5 / Orsay).